The sequence spans 459 residues: Exodeoxyribonuclease 7 large subunit (459 aa).

It belongs to the XseA family. In terms of assembly, heterooligomer composed of large and small subunits.

It localises to the cytoplasm. The catalysed reaction is Exonucleolytic cleavage in either 5'- to 3'- or 3'- to 5'-direction to yield nucleoside 5'-phosphates.. Functionally, bidirectionally degrades single-stranded DNA into large acid-insoluble oligonucleotides, which are then degraded further into small acid-soluble oligonucleotides. The protein is Exodeoxyribonuclease 7 large subunit of Pseudomonas aeruginosa (strain ATCC 15692 / DSM 22644 / CIP 104116 / JCM 14847 / LMG 12228 / 1C / PRS 101 / PAO1).